The following is a 211-amino-acid chain: MRLGLFGGSFDPPHVGHLLVAQDALEALRLDHLLIIPAAQQPLKGAHQTSAHHRLAMVRACFEGVQGIEVDPVEIERGGLSFMVDTVEAVRRRWPDAHLHLLVGRDVVPTLPRWHDVDRLLSMVRLVVLTRDAAPQEGPLLIDAESDSGVVAEVLSTRQVDMSSTEIRSRVRDGRSIRGFVPDAVATYIASTGLYREYPRGSADTERSERA.

It belongs to the NadD family.

It catalyses the reaction nicotinate beta-D-ribonucleotide + ATP + H(+) = deamido-NAD(+) + diphosphate. It participates in cofactor biosynthesis; NAD(+) biosynthesis; deamido-NAD(+) from nicotinate D-ribonucleotide: step 1/1. Its function is as follows. Catalyzes the reversible adenylation of nicotinate mononucleotide (NaMN) to nicotinic acid adenine dinucleotide (NaAD). This Gemmatimonas aurantiaca (strain DSM 14586 / JCM 11422 / NBRC 100505 / T-27) protein is Probable nicotinate-nucleotide adenylyltransferase.